We begin with the raw amino-acid sequence, 204 residues long: Probable GTP-binding protein EngB (204 aa).

One can recognise an EngB-type G domain in the interval T23 to M195. GTP is bound by residues G31–S38, G58–E62, D76–G79, T143–D146, and F174–A176. Residues S38 and T60 each contribute to the Mg(2+) site.

The protein belongs to the TRAFAC class TrmE-Era-EngA-EngB-Septin-like GTPase superfamily. EngB GTPase family. Mg(2+) is required as a cofactor.

Functionally, necessary for normal cell division and for the maintenance of normal septation. In Gemmatimonas aurantiaca (strain DSM 14586 / JCM 11422 / NBRC 100505 / T-27), this protein is Probable GTP-binding protein EngB.